The following is a 139-amino-acid chain: Actin-depolymerizing factor 6 (139 aa).

An ADF-H domain is found at 5–139 (ASGMAVGDEC…SMDIVKARAL (135 aa)).

It belongs to the actin-binding proteins ADF family.

Actin-depolymerizing protein. Severs actin filaments (F-actin) and binds to actin monomers. The polypeptide is Actin-depolymerizing factor 6 (ADF6) (Oryza sativa subsp. japonica (Rice)).